Reading from the N-terminus, the 403-residue chain is DNA polymerase IV (403 aa).

In terms of domain architecture, UmuC spans 23–203 (IAHMDCDAFY…KPVNILPGVG (181 aa)). Asp-27 and Asp-120 together coordinate Mg(2+). The active site involves Glu-121.

The protein belongs to the DNA polymerase type-Y family. Monomer. The cofactor is Mg(2+).

It localises to the cytoplasm. It carries out the reaction DNA(n) + a 2'-deoxyribonucleoside 5'-triphosphate = DNA(n+1) + diphosphate. Poorly processive, error-prone DNA polymerase involved in untargeted mutagenesis. Copies undamaged DNA at stalled replication forks, which arise in vivo from mismatched or misaligned primer ends. These misaligned primers can be extended by PolIV. Exhibits no 3'-5' exonuclease (proofreading) activity. May be involved in translesional synthesis, in conjunction with the beta clamp from PolIII. In Caulobacter vibrioides (strain ATCC 19089 / CIP 103742 / CB 15) (Caulobacter crescentus), this protein is DNA polymerase IV.